The primary structure comprises 694 residues: Polynucleotide 3'-phosphatase ZDP (694 aa).

2 consecutive PARP-type zinc fingers follow at residues 50-132 (VVAE…EQCG) and 165-247 (VIAD…EVNK). Zn(2+)-binding residues include Cys62, Cys65, His93, Cys96, Cys177, Cys180, His208, and Cys211. The segment at 266 to 331 (AIADNELTEE…SPDSSKVISE (66 aa)) is disordered. Residues 302–321 (ESKKPASDEISEQKTKDVKN) show a composition bias toward basic and acidic residues. A compositionally biased stretch (polar residues) spans 322-331 (SPDSSKVISE). The PARP-type 3 zinc-finger motif lies at 328 to 410 (VISEYAKSSR…ALKELVQQCG (83 aa)). Zn(2+)-binding residues include Cys340, Cys343, His371, and Cys374.

This sequence in the C-terminal section; belongs to the DNA 3' phosphatase family. In terms of assembly, interacts with ROS1 (via the central region). Binds to XRCC1.

The protein localises to the nucleus. The protein resides in the nucleoplasm. The catalysed reaction is a 3'end (2'-deoxyribonucleotide 3'-phosphate)-DNA + H2O = a 3'-end 2'-deoxyribonucleotide-DNA + phosphate. Activated by the presence of DNA. Stimulated by XRCC1. In terms of biological role, nick-sensing 3'-phosphoesterase involved in a base excision repair pathway required for active DNA demethylation. The N-terminal DNA-binding domain binds specifically to gap sites and sharply bends the target DNA. Lacks 5'-kinase activity but is capable of 3'-phosphoglycolate end processing. Inactive on 3'-alpha,beta-unsaturated aldehyde (3'-dRP). Protects partially genes from transcriptional silencing by preventing promoter DNA hypermethylation. In Arabidopsis thaliana (Mouse-ear cress), this protein is Polynucleotide 3'-phosphatase ZDP (ZDP).